A 1235-amino-acid polypeptide reads, in one-letter code: Chitin synthase 4 (1235 aa).

Over residues 1–11 the composition is skewed to pro residues; it reads MSLPRRPGPSP. Residues 1–203 form a disordered region; sequence MSLPRRPGPS…ASKGKREKSG (203 aa). The Cytoplasmic segment spans residues 1-212; the sequence is MSLPRRPGPS…GGLPTPSFWN (212 aa). A compositionally biased stretch (basic residues) spans 19 to 28; sequence YRQSGSRRSR. Polar residues predominate over residues 46–59; it reads PSQQQRVPSISSFP. The span at 94-107 shows a compositional bias: basic and acidic residues; that stretch reads IRPERNRIGKDHPN. The segment covering 116-125 has biased composition (polar residues); the sequence is NMNTLPSSTG. Over residues 169–187 the composition is skewed to basic and acidic residues; the sequence is ETEKSGDERRRRRKSDTTK. Residues 188 to 199 are compositionally biased toward basic residues; the sequence is HGKIVKASKGKR. The chain crosses the membrane as a helical span at residues 213 to 233; sequence IYCGFVTFWCPGFVLKCFGMP. Residues 234–244 lie on the Extracellular side of the membrane; it reads EMAQQRAWREK. The helical transmembrane segment at 245 to 265 threads the bilayer; the sequence is MGLISIILLIMGFVGFITFGF. Residues 266-514 are Cytoplasmic-facing; that stretch reads TQVVCGKPPL…ASKVVLYVSL (249 aa). The helical transmembrane segment at 515 to 535 threads the bilayer; it reads VLILAVVLARFVLALIFQWFI. The Extracellular segment spans residues 536 to 1065; sequence SKTYAAAKTS…SMQFIVGIEL (530 aa). The tract at residues 545-592 is disordered; it reads SQTSDQRKRNRQIEDWTEDIYRAPPRLPGEVGSSVAGSSDRQSKRSSA. Residues 549-558 show a composition bias toward basic and acidic residues; that stretch reads DQRKRNRQIE. Asparagine 639 carries an N-linked (GlcNAc...) asparagine glycan. The disordered stretch occupies residues 645 to 670; that stretch reads FLKSDAYGSSSSPADGPGPAGFIHEA. Over residues 648 to 665 the composition is skewed to low complexity; the sequence is SDAYGSSSSPADGPGPAG. The N-linked (GlcNAc...) asparagine glycan is linked to asparagine 1034. The chain crosses the membrane as a helical span at residues 1066–1086; sequence IGTLVLPAAIAFTFYVVIISI. The Cytoplasmic portion of the chain corresponds to 1087-1092; that stretch reads INSPPQ. Residues 1093-1113 form a helical membrane-spanning segment; it reads IIPLVLLGLILGLPAILVVVT. Topologically, residues 1114–1116 are extracellular; sequence AHS. Residues 1117 to 1137 traverse the membrane as a helical segment; it reads WSYIIWMFIYLLSLPVWNFVL. Topologically, residues 1138–1235 are cytoplasmic; the sequence is PTYAFWKFDD…RHFDDYFSDA (98 aa). The disordered stretch occupies residues 1201-1235; that stretch reads RDNVISGVGGSNGWGSSQPRGHEQGRHFDDYFSDA. The span at 1220–1235 shows a compositional bias: basic and acidic residues; it reads RGHEQGRHFDDYFSDA.

The protein belongs to the chitin synthase family. Class IV subfamily.

It localises to the cell membrane. The enzyme catalyses [(1-&gt;4)-N-acetyl-beta-D-glucosaminyl](n) + UDP-N-acetyl-alpha-D-glucosamine = [(1-&gt;4)-N-acetyl-beta-D-glucosaminyl](n+1) + UDP + H(+). Functionally, polymerizes chitin, a structural polymer of the cell wall and septum, by transferring the sugar moiety of UDP-GlcNAc to the non-reducing end of the growing chitin polymer. This Neurospora crassa (strain ATCC 24698 / 74-OR23-1A / CBS 708.71 / DSM 1257 / FGSC 987) protein is Chitin synthase 4 (chs-4).